We begin with the raw amino-acid sequence, 275 residues long: LexA repressor (275 aa).

The disordered stretch occupies residues 1 to 50; it reads MKRSTPRPARSQAALTTSSEESPDRVERGGDGVATVTDFPDGPPDETGLT. The H-T-H motif DNA-binding region spans 73–93; that stretch reads MREIGEAVGLTSTSSVAHQLM. The tract at residues 114–151 is disordered; it reads RSAESAVPDASAGHSPAADRAPSARRPPRGPSPIDSNP. Catalysis depends on for autocatalytic cleavage activity residues Ser-199 and Lys-236.

The protein belongs to the peptidase S24 family. Homodimer.

The catalysed reaction is Hydrolysis of Ala-|-Gly bond in repressor LexA.. Its function is as follows. Represses a number of genes involved in the response to DNA damage (SOS response), including recA and lexA. In the presence of single-stranded DNA, RecA interacts with LexA causing an autocatalytic cleavage which disrupts the DNA-binding part of LexA, leading to derepression of the SOS regulon and eventually DNA repair. This chain is LexA repressor, found in Acidothermus cellulolyticus (strain ATCC 43068 / DSM 8971 / 11B).